A 367-amino-acid polypeptide reads, in one-letter code: Cytochrome b (367 aa).

Helical transmembrane passes span 33–53 (FGSL…FLAM), 77–98 (WVLR…YLHI), 113–133 (WNMG…GYVL), and 178–198 (FFAF…VHLL). Residues histidine 83 and histidine 97 each coordinate heme b. Residues histidine 182 and histidine 196 each contribute to the heme b site. An a ubiquinone-binding site is contributed by histidine 201. The next 4 helical transmembrane spans lie at 226 to 246 (IKDI…VLFS), 288 to 308 (LGGV…PFLH), 320 to 340 (FSQC…WIGG), and 347 to 367 (YIII…VIMP).

This sequence belongs to the cytochrome b family. As to quaternary structure, the cytochrome bc1 complex contains 11 subunits: 3 respiratory subunits (MT-CYB, CYC1 and UQCRFS1), 2 core proteins (UQCRC1 and UQCRC2) and 6 low-molecular weight proteins (UQCRH/QCR6, UQCRB/QCR7, UQCRQ/QCR8, UQCR10/QCR9, UQCR11/QCR10 and a cleavage product of UQCRFS1). This cytochrome bc1 complex then forms a dimer. The cofactor is heme b.

It is found in the mitochondrion inner membrane. Functionally, component of the ubiquinol-cytochrome c reductase complex (complex III or cytochrome b-c1 complex) that is part of the mitochondrial respiratory chain. The b-c1 complex mediates electron transfer from ubiquinol to cytochrome c. Contributes to the generation of a proton gradient across the mitochondrial membrane that is then used for ATP synthesis. The polypeptide is Cytochrome b (MT-CYB) (Hypsugo savii (Savi's pipistrelle)).